Consider the following 330-residue polypeptide: Cathepsin K (330 aa).

Positions 1-16 are cleaved as a signal peptide; sequence MWGLKVVLLLPVMSSA. The propeptide at 17–115 is activation peptide; it reads LYPEEILDTQ…TLYIPDWEGR (99 aa). A glycan (N-linked (GlcNAc...) asparagine) is linked at asparagine 104. Cystine bridges form between cysteine 137–cysteine 178, cysteine 171–cysteine 211, and cysteine 270–cysteine 319. Cysteine 140 is a catalytic residue. Catalysis depends on residues histidine 277 and asparagine 297.

Belongs to the peptidase C1 family. In terms of tissue distribution, expressed in the thyroid epithelial cells.

It is found in the lysosome. The protein localises to the secreted. It localises to the apical cell membrane. It catalyses the reaction Broad proteolytic activity. With small-molecule substrates and inhibitors, the major determinant of specificity is P2, which is preferably Leu, Met &gt; Phe, and not Arg.. Its function is as follows. Thiol protease involved in osteoclastic bone resorption and may participate partially in the disorder of bone remodeling. Displays potent endoprotease activity against fibrinogen at acid pH. May play an important role in extracellular matrix degradation. Involved in the release of thyroid hormone thyroxine (T4) by limited proteolysis of TG/thyroglobulin in the thyroid follicle lumen. This is Cathepsin K (CTSK) from Sus scrofa (Pig).